The primary structure comprises 96 residues: Co-chaperonin GroES (96 aa).

It belongs to the GroES chaperonin family. Heptamer of 7 subunits arranged in a ring. Interacts with the chaperonin GroEL.

The protein resides in the cytoplasm. In terms of biological role, together with the chaperonin GroEL, plays an essential role in assisting protein folding. The GroEL-GroES system forms a nano-cage that allows encapsulation of the non-native substrate proteins and provides a physical environment optimized to promote and accelerate protein folding. GroES binds to the apical surface of the GroEL ring, thereby capping the opening of the GroEL channel. The sequence is that of Co-chaperonin GroES from Aromatoleum aromaticum (strain DSM 19018 / LMG 30748 / EbN1) (Azoarcus sp. (strain EbN1)).